Reading from the N-terminus, the 366-residue chain is Anhydro-N-acetylmuramic acid kinase (366 aa).

10–17 (GTSMDGID) is a binding site for ATP.

The protein belongs to the anhydro-N-acetylmuramic acid kinase family.

The enzyme catalyses 1,6-anhydro-N-acetyl-beta-muramate + ATP + H2O = N-acetyl-D-muramate 6-phosphate + ADP + H(+). It participates in amino-sugar metabolism; 1,6-anhydro-N-acetylmuramate degradation. It functions in the pathway cell wall biogenesis; peptidoglycan recycling. Functionally, catalyzes the specific phosphorylation of 1,6-anhydro-N-acetylmuramic acid (anhMurNAc) with the simultaneous cleavage of the 1,6-anhydro ring, generating MurNAc-6-P. Is required for the utilization of anhMurNAc either imported from the medium or derived from its own cell wall murein, and thus plays a role in cell wall recycling. This chain is Anhydro-N-acetylmuramic acid kinase, found in Legionella pneumophila (strain Corby).